The primary structure comprises 126 residues: Glycine cleavage system H protein (126 aa).

The region spanning 22-104 (TVTIGVTDFA…YGEGWMIKIK (83 aa)) is the Lipoyl-binding domain. Lysine 63 is subject to N6-lipoyllysine.

The protein belongs to the GcvH family. In terms of assembly, the glycine cleavage system is composed of four proteins: P, T, L and H. (R)-lipoate is required as a cofactor.

In terms of biological role, the glycine cleavage system catalyzes the degradation of glycine. The H protein shuttles the methylamine group of glycine from the P protein to the T protein. This Christiangramia forsetii (strain DSM 17595 / CGMCC 1.15422 / KT0803) (Gramella forsetii) protein is Glycine cleavage system H protein.